Consider the following 269-residue polypeptide: 5'-nucleotidase SurE (269 aa).

The a divalent metal cation site is built by D11, D12, S43, and N101.

It belongs to the SurE nucleotidase family. Requires a divalent metal cation as cofactor.

It localises to the cytoplasm. It catalyses the reaction a ribonucleoside 5'-phosphate + H2O = a ribonucleoside + phosphate. Its function is as follows. Nucleotidase that shows phosphatase activity on nucleoside 5'-monophosphates. The protein is 5'-nucleotidase SurE of Prochlorococcus marinus (strain AS9601).